Reading from the N-terminus, the 849-residue chain is Putative pentatricopeptide repeat-containing protein At5g08490 (849 aa).

PPR repeat units lie at residues 20-54 (DHRV…GHIA), 55-89 (CSEV…DPVV), 121-155 (SSVT…GLEK), 156-187 (DTLV…IADK), 188-222 (DVVS…PTEP), 223-260 (NYAT…SWLQ), 262-296 (HVFV…DLVS), 297-327 (WNVV…GDVS), 329-363 (DSVT…SYLL), 365-399 (DTSV…DIIS), 400-430 (WNAI…AITL), 431-465 (DSVT…GLLH), 469-499 (EPKL…LSER), 501-531 (TLVS…MSTT), 532-566 (DLTT…GMRP), 567-597 (NTVT…IIRG), 601-631 (DIRL…DARR), 632-666 (DLVM…NIKP), 667-702 (DHVF…GMKP), and 703-733 (TMEQ…MPVE). The segment at 738-813 (IWGTLLRACT…PAGCSWLEVD (76 aa)) is type E motif. The segment at 814–844 (GQRNVFVSGDCSHPRRDSIFDLVNALYLQMK) is type E(+) motif.

Belongs to the PPR family. PCMP-E subfamily.

This chain is Putative pentatricopeptide repeat-containing protein At5g08490 (PCMP-E32), found in Arabidopsis thaliana (Mouse-ear cress).